A 174-amino-acid polypeptide reads, in one-letter code: 5-hydroxymethyl-dUMP N-hydrolase (174 aa).

Ala2 is subject to N-acetylalanine. Gly27 contributes to the 5-hydroxymethyl-dUMP binding site. Ser28 carries the phosphoserine modification. Residues Ile29, Arg30, Gly31, Ser98, Gly100, and Glu104 each contribute to the 5-hydroxymethyl-dUMP site. At Ser98 the chain carries Phosphoserine. 4 positions are modified to phosphoserine: Ser123, Ser128, Ser138, and Ser169. Ser128 is a binding site for 5-hydroxymethyl-dUMP.

The protein belongs to the 2'-deoxynucleoside 5'-phosphate N-hydrolase 1 family. In terms of assembly, monomer and homodimer. As to expression, expressed at low levels in brain, colon, lung, peripheral blood leukocytes, placenta, small intestine, and thymus. Expressed at high levels in heart, kidney, liver, skeletal muscle and spleen. Overexpressed in a significant proportion of breast cancers.

It is found in the cytoplasm. It localises to the nucleus. The catalysed reaction is 5-hydroxymethyl-dUMP + H2O = 5-hydroxymethyluracil + 2-deoxy-D-ribose 5-phosphate. With respect to regulation, inhibited by AMP and GMP. Functionally, part of a nucleotide salvage pathway that eliminates epigenetically modified 5-hydroxymethyl-dCMP (hmdCMP) in a two-step process entailing deamination to cytotoxic 5-hydroxymethyl-dUMP (hmdUMP), followed by its hydrolysis into 5-hydroxymethyluracil (hmU) and 2-deoxy-D-ribose 5-phosphate (deoxyribosephosphate). Catalyzes the second step in that pathway, the hydrolysis of the N-glycosidic bond in hmdUMP, degrading this cytotoxic nucleotide to avoid its genomic integration. This chain is 5-hydroxymethyl-dUMP N-hydrolase, found in Homo sapiens (Human).